The chain runs to 128 residues: Fluoride-specific ion channel FluC (128 aa).

4 helical membrane passes run 4–24 (VMGIIAVALGGAVGSLARYAI), 37–57 (FGTFIANLAGCLFIGLLWSFF), 65–85 (TFRLFLFTGLLGGLTTFSTFS), and 101–121 (FGYLFLSISLGLAMVAVGFFI). Na(+) contacts are provided by glycine 76 and threonine 79.

The protein belongs to the fluoride channel Fluc/FEX (TC 1.A.43) family.

It is found in the cell inner membrane. It carries out the reaction fluoride(in) = fluoride(out). With respect to regulation, na(+) is not transported, but it plays an essential structural role and its presence is essential for fluoride channel function. Functionally, fluoride-specific ion channel. Important for reducing fluoride concentration in the cell, thus reducing its toxicity. The chain is Fluoride-specific ion channel FluC from Desulfotalea psychrophila (strain LSv54 / DSM 12343).